Here is a 376-residue protein sequence, read N- to C-terminus: N-acetyldiaminopimelate deacetylase (376 aa).

D69 is a catalytic residue. E128 (proton acceptor) is an active-site residue.

This sequence belongs to the peptidase M20A family. N-acetyldiaminopimelate deacetylase subfamily.

It carries out the reaction N-acetyl-(2S,6S)-2,6-diaminopimelate + H2O = (2S,6S)-2,6-diaminopimelate + acetate. It participates in amino-acid biosynthesis; L-lysine biosynthesis via DAP pathway; LL-2,6-diaminopimelate from (S)-tetrahydrodipicolinate (acetylase route): step 3/3. Catalyzes the conversion of N-acetyl-diaminopimelate to diaminopimelate and acetate. This Streptococcus pneumoniae (strain Hungary19A-6) protein is N-acetyldiaminopimelate deacetylase.